Consider the following 249-residue polypeptide: Ubiquinone/menaquinone biosynthesis C-methyltransferase UbiE (249 aa).

S-adenosyl-L-methionine contacts are provided by residues Thr-72, Asp-93, and 121 to 122; that span reads DA.

Belongs to the class I-like SAM-binding methyltransferase superfamily. MenG/UbiE family.

The catalysed reaction is a 2-demethylmenaquinol + S-adenosyl-L-methionine = a menaquinol + S-adenosyl-L-homocysteine + H(+). It carries out the reaction a 2-methoxy-6-(all-trans-polyprenyl)benzene-1,4-diol + S-adenosyl-L-methionine = a 5-methoxy-2-methyl-3-(all-trans-polyprenyl)benzene-1,4-diol + S-adenosyl-L-homocysteine + H(+). It participates in quinol/quinone metabolism; menaquinone biosynthesis; menaquinol from 1,4-dihydroxy-2-naphthoate: step 2/2. Its pathway is cofactor biosynthesis; ubiquinone biosynthesis. Functionally, methyltransferase required for the conversion of demethylmenaquinol (DMKH2) to menaquinol (MKH2) and the conversion of 2-polyprenyl-6-methoxy-1,4-benzoquinol (DDMQH2) to 2-polyprenyl-3-methyl-6-methoxy-1,4-benzoquinol (DMQH2). The protein is Ubiquinone/menaquinone biosynthesis C-methyltransferase UbiE of Teredinibacter turnerae (strain ATCC 39867 / T7901).